We begin with the raw amino-acid sequence, 168 residues long: Thiol peroxidase (168 aa).

The Thioredoxin domain maps to 19–168 (PQAGSKAQTF…YEAALAVLKA (150 aa)). Cys-61 acts as the Cysteine sulfenic acid (-SOH) intermediate in catalysis. Residues Cys-61 and Cys-95 are joined by a disulfide bond.

Belongs to the peroxiredoxin family. Tpx subfamily. Homodimer.

It carries out the reaction a hydroperoxide + [thioredoxin]-dithiol = an alcohol + [thioredoxin]-disulfide + H2O. Functionally, thiol-specific peroxidase that catalyzes the reduction of hydrogen peroxide and organic hydroperoxides to water and alcohols, respectively. Plays a role in cell protection against oxidative stress by detoxifying peroxides. The chain is Thiol peroxidase from Shigella dysenteriae.